Here is a 1064-residue protein sequence, read N- to C-terminus: Fibropellin-1 (1064 aa).

Residues 1–19 (MRTWLLAVLLLSVIAVTYG) form the signal peptide. One can recognise an EGF-like 1 domain in the interval 20–55 (QGECDSDPCENGSTCQEGEGSYICQCPMGYDGQNCD). 4 disulfides stabilise this stretch: Cys23-Cys34, Cys28-Cys43, Cys45-Cys54, and Cys62-Cys88. Asn30 is a glycosylation site (N-linked (GlcNAc...) asparagine). The CUB domain maps to 62–175 (CGYNVFDANG…NRGFRITFSS (114 aa)). Asn136 carries N-linked (GlcNAc...) asparagine glycosylation. One can recognise an EGF-like 2; calcium-binding domain in the interval 176–212 (DGDDCDPNLCQNGAACTDLVNDYACTCPPGFTGRNCE). 61 cysteine pairs are disulfide-bonded: Cys180–Cys191, Cys185–Cys200, Cys202–Cys211, Cys218–Cys229, Cys223–Cys238, Cys240–Cys249, Cys256–Cys267, Cys261–Cys276, Cys278–Cys287, Cys294–Cys305, Cys299–Cys314, Cys316–Cys325, Cys332–Cys343, Cys337–Cys352, Cys354–Cys363, Cys370–Cys381, Cys375–Cys390, Cys392–Cys401, Cys408–Cys419, Cys413–Cys428, Cys430–Cys439, Cys446–Cys457, Cys451–Cys466, Cys468–Cys477, Cys484–Cys495, Cys489–Cys504, Cys506–Cys515, Cys522–Cys533, Cys527–Cys542, Cys544–Cys553, Cys560–Cys571, Cys565–Cys580, Cys582–Cys591, Cys598–Cys609, Cys603–Cys618, Cys620–Cys629, Cys636–Cys647, Cys641–Cys656, Cys658–Cys667, Cys674–Cys685, Cys679–Cys694, Cys696–Cys705, Cys712–Cys723, Cys717–Cys732, Cys734–Cys743, Cys750–Cys761, Cys755–Cys770, Cys772–Cys781, Cys788–Cys799, Cys793–Cys808, Cys810–Cys819, Cys826–Cys837, Cys831–Cys846, Cys848–Cys857, Cys864–Cys875, Cys869–Cys884, Cys886–Cys895, Cys902–Cys913, Cys907–Cys922, Cys924–Cys933, and Cys939–Cys1015. An EGF-like 3; calcium-binding domain is found at 214 to 250 (DIDECASDPCQNGGACVDGVNGYVCNCVPGFDGDECE). The region spanning 252–288 (NINECASSPCLNGGICVDGVNMFECTCLAGFTGVRCE) is the EGF-like 4; calcium-binding domain. An EGF-like 5; calcium-binding domain is found at 290–326 (NIDECASAPCQNGGICIDGINGYTCSCPLGFSGDNCE). One can recognise an EGF-like 6; calcium-binding domain in the interval 328–364 (NDDECSSIPCLNGGTCVDLVNAYMCVCAPGWTGPTCA). The 37-residue stretch at 366–402 (NIDECASAPCQNGGVCIDGVNGYMCDCQPGYTGTHCE) folds into the EGF-like 7; calcium-binding domain. In terms of domain architecture, EGF-like 8; calcium-binding spans 404–440 (DIDECARPPCQNGGDCVDGVNGYVCICAPGFDGLNCE). In terms of domain architecture, EGF-like 9; calcium-binding spans 442-478 (NIDECASRPCQNGAVCVDGVNGFVCTCSAGYTGVLCE). The region spanning 480–516 (DINECASMPCLNGGVCTDLVNGYICTCAAGFEGTNCE) is the EGF-like 10; calcium-binding domain. In terms of domain architecture, EGF-like 11; calcium-binding spans 518 to 554 (DTDECASFPCQNGATCTDQVNGYVCTCVPGYTGVLCE). The EGF-like 12; calcium-binding domain maps to 556-592 (DINECASFPCLNGGTCNDQVNGYVCVCAQDTSVSTCE). Residues 594–630 (DRDECASAPCLNGGACMDVVNGFVCTCLPGWEGTNCE) form the EGF-like 13; calcium-binding domain. The EGF-like 14; calcium-binding domain maps to 632–668 (NTDECASSPCMNGGLCVDQVNSYVCFCLPGFTGIHCG). Residues 670 to 706 (EIDECASSPCLNGGQCIDRVDSYECVCAAGYTAVRCQ) form the EGF-like 15; calcium-binding domain. Residues 708 to 744 (NIDECASAPCQNGGVCVDGVNGYVCNCAPGYTGDNCE) enclose the EGF-like 16; calcium-binding domain. Residues 746-782 (EIDECASMPCLNGGACIEMVNGYTCQCVAGYTGVICE) enclose the EGF-like 17; calcium-binding domain. In terms of domain architecture, EGF-like 18; calcium-binding spans 784-820 (DIDECASAPCQNGGVCTDTINGYICACVPGFTGSNCE). Residues 822 to 858 (NIDECASDPCLNGGICVDGVNGFVCQCPPNYSGTYCE) enclose the EGF-like 19; calcium-binding domain. N-linked (GlcNAc...) asparagine glycosylation is present at Asn851. The EGF-like 20 domain occupies 860–896 (SLDACRSMPCQNGATCVNVGADYVCECVPGYAGQNCE). The EGF-like 21; calcium-binding domain maps to 898–934 (DINECASLPCQNGGLCIDGIAGYTCQCRLGYIGVNCE). The region spanning 937-1056 (GFCDLEGMWY…GQDKWTRYEQ (120 aa)) is the Avidin-like domain.

Homotetramer.

It localises to the secreted. The protein resides in the extracellular space. It is found in the cytoplasmic vesicle. Its subcellular location is the extracellular matrix. The protein localises to the hyaline layer. It localises to the apical lamina. Its function is as follows. Forms the apical lamina, a component of the extracellular matrix. The sequence is that of Fibropellin-1 (EGF1) from Strongylocentrotus purpuratus (Purple sea urchin).